The chain runs to 447 residues: NADH peroxidase (447 aa).

FAD contacts are provided by residues 7-11 (GSSHG), E32, C42, 110-113 (SPGA), and R132. H10 serves as the catalytic Proton acceptor. C42 (redox-active) is an active-site residue. C42 is subject to Cysteine sulfenic acid (-SOH). NAD(+)-binding residues include I160, D179, Y188, and G243. An FAD-binding site is contributed by D281. An NAD(+)-binding site is contributed by A297. An FAD-binding site is contributed by A299. G328 contacts NAD(+).

It belongs to the class-III pyridine nucleotide-disulfide oxidoreductase family. Homotetramer. FAD serves as cofactor.

The enzyme catalyses H2O2 + NADH + H(+) = NAD(+) + 2 H2O. In terms of biological role, peroxidase whose active site is a redox-active cysteine-sulfenic acid. This is NADH peroxidase (npr) from Enterococcus faecalis (strain ATCC 700802 / V583).